A 529-amino-acid polypeptide reads, in one-letter code: Probable DNA helicase MPN_340 (529 aa).

The 284-residue stretch at 2-285 (EHLNQEQKAA…FYTTQNYRSI (284 aa)) folds into the UvrD-like helicase ATP-binding domain. Position 23–30 (23–30 (SGAGTGKT)) interacts with ATP.

This sequence belongs to the helicase family. UvrD subfamily.

It catalyses the reaction Couples ATP hydrolysis with the unwinding of duplex DNA by translocating in the 3'-5' direction.. The catalysed reaction is ATP + H2O = ADP + phosphate + H(+). This chain is Probable DNA helicase MPN_340, found in Mycoplasma pneumoniae (strain ATCC 29342 / M129 / Subtype 1) (Mycoplasmoides pneumoniae).